The chain runs to 429 residues: Adenylosuccinate synthetase (429 aa).

Residues 12–18 and 40–42 contribute to the GTP site; these read GDEGKGK and GHT. The active-site Proton acceptor is the aspartate 13. Mg(2+) contacts are provided by aspartate 13 and glycine 40. IMP-binding positions include 13–16, 38–41, threonine 128, arginine 142, glutamine 223, threonine 238, and arginine 302; these read DEGK and NAGH. Catalysis depends on histidine 41, which acts as the Proton donor. 298–304 is a substrate binding site; sequence TVTGRPR. GTP is bound by residues arginine 304, 330–332, and 412–414; these read LLD and SVG.

The protein belongs to the adenylosuccinate synthetase family. As to quaternary structure, homodimer. It depends on Mg(2+) as a cofactor.

It localises to the cytoplasm. The catalysed reaction is IMP + L-aspartate + GTP = N(6)-(1,2-dicarboxyethyl)-AMP + GDP + phosphate + 2 H(+). It participates in purine metabolism; AMP biosynthesis via de novo pathway; AMP from IMP: step 1/2. Its function is as follows. Plays an important role in the de novo pathway of purine nucleotide biosynthesis. Catalyzes the first committed step in the biosynthesis of AMP from IMP. The sequence is that of Adenylosuccinate synthetase from Lactobacillus helveticus (strain DPC 4571).